The primary structure comprises 91 residues: Large ribosomal subunit protein bL27 (91 aa).

The interval 1–22 is disordered; that stretch reads MAHKKAGGSSRNGRDSDGRRLG.

It belongs to the bacterial ribosomal protein bL27 family.

The sequence is that of Large ribosomal subunit protein bL27 from Beijerinckia indica subsp. indica (strain ATCC 9039 / DSM 1715 / NCIMB 8712).